The following is a 1149-amino-acid chain: Eukaryotic translation initiation factor 3 subunit A (1149 aa).

Residues 317–498 (IQRMTSHVLI…HSVHFGTDLS (182 aa)) enclose the PCI domain. Disordered regions lie at residues 496 to 515 (DLSE…QSMP) and 811 to 1149 (EEER…KHHR). Basic and acidic residues predominate over residues 811–885 (EEERRRIEEE…APRGEKEERG (75 aa)). A compositionally biased stretch (gly residues) spans 886 to 895 (GGGGGGGAWR). The span at 908–924 (AKPESDWRNAREAREPA) shows a compositional bias: basic and acidic residues. A compositionally biased stretch (low complexity) spans 925–937 (PESAGASSAAAPA). Composition is skewed to basic and acidic residues over residues 961 to 970 (RPPRGDDREP), 1005 to 1095 (GPMR…DRRG), and 1113 to 1132 (EPAK…KEAR).

The protein belongs to the eIF-3 subunit A family. As to quaternary structure, component of the eukaryotic translation initiation factor 3 (eIF-3) complex.

The protein resides in the cytoplasm. RNA-binding component of the eukaryotic translation initiation factor 3 (eIF-3) complex, which is involved in protein synthesis of a specialized repertoire of mRNAs and, together with other initiation factors, stimulates binding of mRNA and methionyl-tRNAi to the 40S ribosome. The eIF-3 complex specifically targets and initiates translation of a subset of mRNAs involved in cell proliferation. The polypeptide is Eukaryotic translation initiation factor 3 subunit A (Culex quinquefasciatus (Southern house mosquito)).